Reading from the N-terminus, the 416-residue chain is MFSKSMTIEQVDPDLWRAIQGEVQRQEDHIELIASENYASPAVLQAQGTVLTNKYAEGYPGKRYYGGCKHVDIVEQLAIDRLRALFNAEYVNVQPHSGSQANAAVYLSALKPGDTLLGMSLAHGGHLTHGAPVNMSGKIFNSIAYGLDPETEEIDYTELEQLAHEHKPRMIVAGASSYARVIDWQAFRKIADNVGAYLFVDMAHYAGLIAAGYYPNPVGIADFVTSSTHKTLRGPRGGVIMAKPEHEKALNSAVFPQTQGGPLMHVIAAKAVAFKEAASPAFKDYQKQVIENARVMARVLQQRGLRIVSGHTDCHMFLVDLRAKNLTGREAETALETAHITVNKNAIPNDPQKPFVTSGVRIGTPAITTRGFKELESEQLANLVADVLEAPTNEAVLDQVAREAQALCAKFPVYGN.

(6S)-5,6,7,8-tetrahydrofolate-binding positions include L121 and 125 to 127; that span reads GHL. N6-(pyridoxal phosphate)lysine is present on K230.

It belongs to the SHMT family. In terms of assembly, homodimer. Requires pyridoxal 5'-phosphate as cofactor.

The protein localises to the cytoplasm. It carries out the reaction (6R)-5,10-methylene-5,6,7,8-tetrahydrofolate + glycine + H2O = (6S)-5,6,7,8-tetrahydrofolate + L-serine. Its pathway is one-carbon metabolism; tetrahydrofolate interconversion. The protein operates within amino-acid biosynthesis; glycine biosynthesis; glycine from L-serine: step 1/1. Functionally, catalyzes the reversible interconversion of serine and glycine with tetrahydrofolate (THF) serving as the one-carbon carrier. This reaction serves as the major source of one-carbon groups required for the biosynthesis of purines, thymidylate, methionine, and other important biomolecules. Also exhibits THF-independent aldolase activity toward beta-hydroxyamino acids, producing glycine and aldehydes, via a retro-aldol mechanism. The sequence is that of Serine hydroxymethyltransferase from Nitrosomonas eutropha (strain DSM 101675 / C91 / Nm57).